Reading from the N-terminus, the 172-residue chain is Stellate protein CG33236/CG33240/CG33244/CG33245 (172 aa).

This sequence belongs to the casein kinase 2 subunit beta family. In terms of assembly, interacts in vitro with the casein kinase 2 alpha subunit (CkII-alpha). The relevance of such interaction is however unclear in vivo. In terms of tissue distribution, probably not expressed in wild-type flies. In males lacking the Y chromosome, it is testis-specific and constitutes the main component of star-shaped crystals.

Unknown. In males lacking the Y chromosome, its strong overexpression leads to the appearance of proteinaceous star-shaped crystals in the primary spermatocytes causing meiotic drive, possibly by interfering with normal casein kinase 2 activity. The chain is Stellate protein CG33236/CG33240/CG33244/CG33245 (Ste:CG33236) from Drosophila melanogaster (Fruit fly).